The chain runs to 414 residues: Isocitrate dehydrogenase [NADP] cytoplasmic (414 aa).

N-acetylserine is present on S2. Y42 carries the post-translational modification Phosphotyrosine. Residue 75 to 77 (TIT) coordinates NADP(+). T77 lines the substrate pocket. K81 carries the N6-acetyllysine modification. R82 provides a ligand contact to NADP(+). Substrate-binding positions include 94–100 (SPNGTIR) and R109. At K126 the chain carries N6-succinyllysine. Residues R132 and K212 each contribute to the substrate site. Residues K224, K233, and K243 each carry the N6-acetyllysine modification. D252 contributes to the Mn(2+) binding site. An NADP(+)-binding site is contributed by K260. Mn(2+)-binding residues include D275 and D279. 310 to 315 (GTVTRH) provides a ligand contact to NADP(+). Position 321 is an N6-acetyllysine (K321). N328 is a binding site for NADP(+). S389 is modified (phosphoserine). N6-succinyllysine is present on K400.

The protein belongs to the isocitrate and isopropylmalate dehydrogenases family. Homodimer. The cofactor is Mg(2+). Requires Mn(2+) as cofactor. Post-translationally, acetylation at Lys-374 dramatically reduces catalytic activity.

The protein resides in the cytoplasm. It localises to the cytosol. It catalyses the reaction D-threo-isocitrate + NADP(+) = 2-oxoglutarate + CO2 + NADPH. Functionally, catalyzes the NADP(+)-dependent oxidative decarboxylation of isocitrate (D-threo-isocitrate) to 2-ketoglutarate (2-oxoglutarate), which is required by other enzymes such as the phytanoyl-CoA dioxygenase. Plays a critical role in the generation of NADPH, an important cofactor in many biosynthesis pathways. May act as a corneal epithelial crystallin and may be involved in maintaining corneal epithelial transparency. The sequence is that of Isocitrate dehydrogenase [NADP] cytoplasmic (IDH1) from Microtus mexicanus (Mexican vole).